A 380-amino-acid polypeptide reads, in one-letter code: Flap endonuclease 1 (380 aa).

The tract at residues 1-104 (MGIKGLSQLI…GELTKRAEKR (104 aa)) is N-domain. A Mg(2+)-binding site is contributed by D34. 2 residues coordinate DNA: R47 and R70. Residues D86, E158, E160, D179, and D181 each coordinate Mg(2+). The segment at 122–253 (DIDKFNRRLV…KKAVELINKH (132 aa)) is I-domain. DNA is bound at residue E158. G231 and D233 together coordinate DNA. Mg(2+) is bound at residue D233. Residues 336–344 (TQGRLDSFF) form an interaction with PCNA region. Positions 342–380 (SFFKVLPSTPNPKRKIEDKKTPASKKAKTTGGKPGRKPK) are disordered. A compositionally biased stretch (basic residues) spans 363-380 (PASKKAKTTGGKPGRKPK).

Belongs to the XPG/RAD2 endonuclease family. FEN1 subfamily. In terms of assembly, interacts with PCNA. Three molecules of FEN1 bind to one PCNA trimer with each molecule binding to one PCNA monomer. PCNA stimulates the nuclease activity without altering cleavage specificity. Mg(2+) is required as a cofactor. Phosphorylated. Phosphorylation upon DNA damage induces relocalization to the nuclear plasma.

The protein resides in the nucleus. It localises to the nucleolus. The protein localises to the nucleoplasm. It is found in the mitochondrion. In terms of biological role, structure-specific nuclease with 5'-flap endonuclease and 5'-3' exonuclease activities involved in DNA replication and repair. During DNA replication, cleaves the 5'-overhanging flap structure that is generated by displacement synthesis when DNA polymerase encounters the 5'-end of a downstream Okazaki fragment. It enters the flap from the 5'-end and then tracks to cleave the flap base, leaving a nick for ligation. Also involved in the long patch base excision repair (LP-BER) pathway, by cleaving within the apurinic/apyrimidinic (AP) site-terminated flap. Acts as a genome stabilization factor that prevents flaps from equilibrating into structures that lead to duplications and deletions. Also possesses 5'-3' exonuclease activity on nicked or gapped double-stranded DNA, and exhibits RNase H activity. Also involved in replication and repair of rDNA and in repairing mitochondrial DNA. This Aedes aegypti (Yellowfever mosquito) protein is Flap endonuclease 1.